The primary structure comprises 493 residues: MALSRCLRTRTAFLSPLDQLNSSFYIRWSLVLHAKDRDKAVNRLSKGLNAVTSKLPFLKGRINYHTDTANNKIASASRAVISMSDDSPNLSLRELRPAKELPSLARIKQQGAPSHLFTDDLYSLPIFIDTTSKQSHPVLKTTYAPIEGGLILNICVHHGVMDGQGLATLTDLWASFTRQQDQNENEVQQPKNLPDPDEPLTRTARLATAINATADPEITDIETSLQRYRNDRILEQNIAASTGDSRKKTSRIFAFSSNKLKDAKEVLANNGCHVTTNSILNAAVWSNLTRVRLSRRTQLPPTPFARFTQMVDGRRQLLPKINKPGPYMGNVVLTSSADVSLDTLVATGFFNYLSVSLMAPVAQAIYDASRKVTTEYIDGFLKTLQKVDDPASLGIGSMSQHGVDFISTSVANAPFYECDFGPSLSEDSAGGKEGKPVFVRYPYIDWADGNMILLPRRRQPTENDETIEAYIMLAEDDLVALAEDPGFCSWLKE.

The span at 180-191 shows a compositional bias: polar residues; that stretch reads QDQNENEVQQPK. Positions 180–199 are disordered; it reads QDQNENEVQQPKNLPDPDEP.

The protein operates within sesquiterpene biosynthesis; trichothecene biosynthesis. In terms of biological role, trichothecene 8-O-acetyltransferase; part of 2-gene cluster involved in trichothecene C-8 modification that mediates the biosynthesis of T2-toxin. The biosynthesis of trichothecenes begins with the cyclization of farnesyl diphosphate to trichodiene and is catalyzed by the trichodiene synthase TRI5. Trichodiene undergoes a series of oxygenations catalyzed by the cytochrome P450 monooxygenase TRI4. TRI4 controls the addition of four oxygens at C-2, C-3, C-11, and the C-12, C-13-epoxide to form the intermediate isotrichotriol. Isotrichotriol then undergoes a non-enzymatic isomerization and cyclization to form isotrichodermol. During this process, the oxygen at the C-2 position becomes the pyran ring oxygen and the hydroxyl group at C-11 is lost. More complex type A trichothecenes are built by modifying isotrichodermol through a series of paired hydroxylation and acetylation or acylation steps. Isotrichodermol is converted to isotrichodermin by the acetyltransferase TRI101. TRI101 encodes a C-3 transacetylase that acts as a self-protection or resistance factor during biosynthesis and that the presence of a free C-3 hydroxyl group is a key component of Fusarium trichothecene phytotoxicity. A second hydroxyl group is added to C-15 by the trichothecene C-15 hydroxylase TRI11, producing 15-decalonectrin, which is then acetylated by TRI3, producing calonectrin. A third hydroxyl group is added at C-4 by the cytochrome P450 monooxygenase TRI13, converting calonectrin to 3,15-diacetoxyspirpenol, which is subsequently acetylated bythe acetyltransferase TRI7. A fourth hydroxyl group is added to C-8 by the cytochrome P450 monooxygenase TRI1, followed by the addition of an isovaleryl moiety by TRI16. Finally, the acetyl group is removed from the C-3 position by the trichothecene C-3 esterase TRI8 to produce T-2 toxin. This is Trichothecene 8-O-acetyltransferase from Fusarium sporotrichioides.